A 357-amino-acid polypeptide reads, in one-letter code: DNA integrity scanning protein DisA (357 aa).

Positions 9–147 (DRKLLEILKT…DDIKYILRDS (139 aa)) constitute a DAC domain. ATP-binding positions include Gly76, Leu94, and 107 to 111 (TRHRT).

Belongs to the DisA family. In terms of assembly, homooctamer. Requires Mg(2+) as cofactor.

The enzyme catalyses 2 ATP = 3',3'-c-di-AMP + 2 diphosphate. Functionally, participates in a DNA-damage check-point that is active prior to asymmetric division when DNA is damaged. DisA forms globular foci that rapidly scan along the chromosomes during sporulation, searching for lesions. When a lesion is present, DisA pauses at the lesion site. This triggers a cellular response that culminates in a temporary block in sporulation initiation. Its function is as follows. Also has diadenylate cyclase activity, catalyzing the condensation of 2 ATP molecules into cyclic di-AMP (c-di-AMP). c-di-AMP acts as a signaling molecule that couples DNA integrity with progression of sporulation. The rise in c-di-AMP level generated by DisA while scanning the chromosome, operates as a positive signal that advances sporulation; upon encountering a lesion, the DisA focus arrests at the damaged site and halts c-di-AMP synthesis. This Clostridium acetobutylicum (strain ATCC 824 / DSM 792 / JCM 1419 / IAM 19013 / LMG 5710 / NBRC 13948 / NRRL B-527 / VKM B-1787 / 2291 / W) protein is DNA integrity scanning protein DisA.